The primary structure comprises 182 residues: Transcription repressor OFP11 (182 aa).

The disordered stretch occupies residues 62–94 (PLHRRHSSENPAGVFSTNRREEEEEDETTTSVS). An OVATE domain is found at 104–169 (MKHIESPDPY…VSAFADTLLW (66 aa)).

Expressed in roots, rosette and cauline leaves, shoots, stems, flower buds and siliques.

It localises to the nucleus. In terms of biological role, transcriptional repressor that may regulate multiple aspects of plant growth and development through the regulation of BEL1-LIKE (BLH) and KNOX TALE (KNAT) homeodomain transcription factors. This is Transcription repressor OFP11 (OFP11) from Arabidopsis thaliana (Mouse-ear cress).